A 194-amino-acid polypeptide reads, in one-letter code: ATP-dependent Clp protease proteolytic subunit (194 aa).

Ser-97 serves as the catalytic Nucleophile. His-122 is a catalytic residue.

Belongs to the peptidase S14 family. Fourteen ClpP subunits assemble into 2 heptameric rings which stack back to back to give a disk-like structure with a central cavity, resembling the structure of eukaryotic proteasomes.

It is found in the cytoplasm. The catalysed reaction is Hydrolysis of proteins to small peptides in the presence of ATP and magnesium. alpha-casein is the usual test substrate. In the absence of ATP, only oligopeptides shorter than five residues are hydrolyzed (such as succinyl-Leu-Tyr-|-NHMec, and Leu-Tyr-Leu-|-Tyr-Trp, in which cleavage of the -Tyr-|-Leu- and -Tyr-|-Trp bonds also occurs).. In terms of biological role, cleaves peptides in various proteins in a process that requires ATP hydrolysis. Has a chymotrypsin-like activity. Plays a major role in the degradation of misfolded proteins. In Campylobacter jejuni subsp. jejuni serotype O:23/36 (strain 81-176), this protein is ATP-dependent Clp protease proteolytic subunit.